The sequence spans 341 residues: tRNA N6-adenosine threonylcarbamoyltransferase (341 aa).

Fe cation contacts are provided by His-111 and His-115. Residues 134-138 (LVSGG), Asp-167, Gly-180, and Asn-276 contribute to the substrate site. Fe cation is bound at residue Asp-304.

The protein belongs to the KAE1 / TsaD family. It depends on Fe(2+) as a cofactor.

It localises to the cytoplasm. The catalysed reaction is L-threonylcarbamoyladenylate + adenosine(37) in tRNA = N(6)-L-threonylcarbamoyladenosine(37) in tRNA + AMP + H(+). Required for the formation of a threonylcarbamoyl group on adenosine at position 37 (t(6)A37) in tRNAs that read codons beginning with adenine. Is involved in the transfer of the threonylcarbamoyl moiety of threonylcarbamoyl-AMP (TC-AMP) to the N6 group of A37, together with TsaE and TsaB. TsaD likely plays a direct catalytic role in this reaction. The protein is tRNA N6-adenosine threonylcarbamoyltransferase of Pseudomonas fluorescens (strain ATCC BAA-477 / NRRL B-23932 / Pf-5).